Here is a 535-residue protein sequence, read N- to C-terminus: Aklavinone 12-hydroxylase RdmE (535 aa).

5 residues coordinate FAD: Leu-15, Gly-16, Glu-35, Gln-119, and Leu-143. The active-site Proton acceptor is Tyr-224. FAD is bound at residue Asp-308. Gly-317 is a binding site for aklavinone.

The protein belongs to the PheA/TfdB FAD monooxygenase family. As to quaternary structure, monomer. The cofactor is FAD.

The catalysed reaction is aklavinone + NADPH + O2 + H(+) = epsilon-rhodomycinone + NADP(+) + H2O. It functions in the pathway antibiotic biosynthesis; daunorubicin biosynthesis. Its pathway is antibiotic biosynthesis; carminomycin biosynthesis. It participates in antibiotic biosynthesis; rhodomycin biosynthesis. Its activity is regulated as follows. Inhibited by phenylglyoxal and 2,3-butanedione. NADP provides a partial protection against inhibition by phenylglyoxal. Increasing the methanol concentration in the assay causes inhibition of the enzyme. In terms of biological role, involved in the biosynthesis of the anthracyclines carminomycin, rhodomycin and daunorubicin (daunomycin) which are aromatic polyketide antibiotics that exhibit high cytotoxicity and are widely applied in the chemotherapy of a variety of cancers. Catalyzes the incorporation of a hydroxyl group at position C-11 of aklavinone, resulting in epsilon-rhodomycinone. It cannot accept substrates glycosylated at position C-7 and is specific for the C-9R configuration of anthracyclines. It can use both NAD or NADP but it is slowly inactivated in the presence of NADH. This is Aklavinone 12-hydroxylase RdmE (rdmE) from Streptomyces purpurascens.